Here is a 298-residue protein sequence, read N- to C-terminus: MPSLKSLKTRVSSIKSISKITRAMQMVASAKLRRAESRLAAARPYAKRMAQVMSLLAARAAGTPNALPLLNGRGKDQTHLLIVTSSDAGLCGGFNSNIYRQARDRALALEAAGKTVQFYVIGIKNAPVIRNNFPGKTIHETKREETSPVTFENAQKIAQDLIQRFNAGEFDVAHLFFSHYHSVLSQVPTETQIIPAAPEGDDTKNQAAANDASSGAIEFEPDEETILSTLLPRSIAVAIYQAMLENATSEQGSRMSAMENSTRNAGEMISKLSIQYNRLRQAAITTELVEIISGAEAL.

Belongs to the ATPase gamma chain family. In terms of assembly, F-type ATPases have 2 components, CF(1) - the catalytic core - and CF(0) - the membrane proton channel. CF(1) has five subunits: alpha(3), beta(3), gamma(1), delta(1), epsilon(1). CF(0) has three main subunits: a, b and c.

Its subcellular location is the cell inner membrane. Produces ATP from ADP in the presence of a proton gradient across the membrane. The gamma chain is believed to be important in regulating ATPase activity and the flow of protons through the CF(0) complex. The protein is ATP synthase gamma chain of Zymomonas mobilis subsp. mobilis (strain ATCC 31821 / ZM4 / CP4).